Here is a 98-residue protein sequence, read N- to C-terminus: Conotoxin Di19A (98 aa).

Residues 1–19 (MSTLGILLPIALLLPLANP) form the signal peptide. Positions 20–49 (AENGDGQAMPRTRNLRSLSFGRTLRRLEKR) are excised as a propeptide. P53 is subject to 4-hydroxyproline. Position 63 is a 4-carboxyglutamate (E63). 4-hydroxyproline is present on residues P68, P93, and P97.

Contains 5 disulfide bonds. As to expression, expressed by the venom duct.

Its subcellular location is the secreted. Its function is as follows. Injection of the synthetic peptide causes a hyperexcitable phenotype in mice greater than three weeks of age at lower doses, and lethargy at higher doses. The polypeptide is Conotoxin Di19A (Conus distans (Distant cone)).